The chain runs to 118 residues: Protein YoeF (118 aa).

The chain is Protein YoeF (yoeF) from Escherichia coli (strain K12).